A 525-amino-acid chain; its full sequence is GMP synthase [glutamine-hydrolyzing] (525 aa).

The 199-residue stretch at 9–207 (RILILDFGSQ…VRDICQCEAL (199 aa)) folds into the Glutamine amidotransferase type-1 domain. Catalysis depends on C86, which acts as the Nucleophile. Residues H181 and E183 contribute to the active site. The region spanning 208 to 400 (WTPAKIIDDA…LGLPYDMLYR (193 aa)) is the GMPS ATP-PPase domain. 235-241 (SGGVDSS) contributes to the ATP binding site.

As to quaternary structure, homodimer.

The catalysed reaction is XMP + L-glutamine + ATP + H2O = GMP + L-glutamate + AMP + diphosphate + 2 H(+). It functions in the pathway purine metabolism; GMP biosynthesis; GMP from XMP (L-Gln route): step 1/1. In terms of biological role, catalyzes the synthesis of GMP from XMP. The polypeptide is GMP synthase [glutamine-hydrolyzing] (Klebsiella pneumoniae subsp. pneumoniae (strain ATCC 700721 / MGH 78578)).